The sequence spans 208 residues: FMN-dependent NADH:quinone oxidoreductase 1 (208 aa).

17–19 is a binding site for FMN; that stretch reads SVS.

Belongs to the azoreductase type 1 family. Homodimer. It depends on FMN as a cofactor.

The catalysed reaction is 2 a quinone + NADH + H(+) = 2 a 1,4-benzosemiquinone + NAD(+). The enzyme catalyses N,N-dimethyl-1,4-phenylenediamine + anthranilate + 2 NAD(+) = 2-(4-dimethylaminophenyl)diazenylbenzoate + 2 NADH + 2 H(+). In terms of biological role, quinone reductase that provides resistance to thiol-specific stress caused by electrophilic quinones. Functionally, also exhibits azoreductase activity. Catalyzes the reductive cleavage of the azo bond in aromatic azo compounds to the corresponding amines. This is FMN-dependent NADH:quinone oxidoreductase 1 from Listeria monocytogenes serotype 4b (strain F2365).